We begin with the raw amino-acid sequence, 345 residues long: Ketol-acid reductoisomerase (NADP(+)) (345 aa).

A KARI N-terminal Rossmann domain is found at 2-182; the sequence is AKVYHDSSAD…GTTRAGVLET (181 aa). Residues 25–28, R48, S51, S53, and 83–86 contribute to the NADP(+) site; these read YGSQ and DTEQ. Residue H108 is part of the active site. NADP(+) is bound at residue G134. The KARI C-terminal knotted domain occupies 183-328; sequence TFKEETETDL…AQLRDMMTFL (146 aa). Positions 191, 195, 227, and 231 each coordinate Mg(2+). Substrate is bound at residue S252.

It belongs to the ketol-acid reductoisomerase family. It depends on Mg(2+) as a cofactor.

The catalysed reaction is (2R)-2,3-dihydroxy-3-methylbutanoate + NADP(+) = (2S)-2-acetolactate + NADPH + H(+). It catalyses the reaction (2R,3R)-2,3-dihydroxy-3-methylpentanoate + NADP(+) = (S)-2-ethyl-2-hydroxy-3-oxobutanoate + NADPH + H(+). It participates in amino-acid biosynthesis; L-isoleucine biosynthesis; L-isoleucine from 2-oxobutanoate: step 2/4. It functions in the pathway amino-acid biosynthesis; L-valine biosynthesis; L-valine from pyruvate: step 2/4. In terms of biological role, involved in the biosynthesis of branched-chain amino acids (BCAA). Catalyzes an alkyl-migration followed by a ketol-acid reduction of (S)-2-acetolactate (S2AL) to yield (R)-2,3-dihydroxy-isovalerate. In the isomerase reaction, S2AL is rearranged via a Mg-dependent methyl migration to produce 3-hydroxy-3-methyl-2-ketobutyrate (HMKB). In the reductase reaction, this 2-ketoacid undergoes a metal-dependent reduction by NADPH to yield (R)-2,3-dihydroxy-isovalerate. The chain is Ketol-acid reductoisomerase (NADP(+)) from Koribacter versatilis (strain Ellin345).